Here is a 286-residue protein sequence, read N- to C-terminus: Polyamine aminopropyltransferase (286 aa).

Positions 9 to 242 (NGWIDEHHQG…GWWSWTFAAI (234 aa)) constitute a PABS domain. Residue Gln-36 participates in S-methyl-5'-thioadenosine binding. Spermidine is bound by residues His-67 and Asp-91. S-methyl-5'-thioadenosine is bound by residues Glu-111 and 143-144 (NG). Residue Asp-162 is the Proton acceptor of the active site. An S-methyl-5'-thioadenosine-binding site is contributed by Pro-169.

Belongs to the spermidine/spermine synthase family. Homodimer or homotetramer.

The protein resides in the cytoplasm. It catalyses the reaction S-adenosyl 3-(methylsulfanyl)propylamine + putrescine = S-methyl-5'-thioadenosine + spermidine + H(+). It functions in the pathway amine and polyamine biosynthesis; spermidine biosynthesis; spermidine from putrescine: step 1/1. In terms of biological role, catalyzes the irreversible transfer of a propylamine group from the amino donor S-adenosylmethioninamine (decarboxy-AdoMet) to putrescine (1,4-diaminobutane) to yield spermidine. The protein is Polyamine aminopropyltransferase of Prochlorococcus marinus (strain MIT 9313).